The chain runs to 1175 residues: DNA ligase 3 (1175 aa).

Residues H195–K243 form a disordered region. The segment covering N199–S221 has biased composition (acidic residues). E281 provides a ligand contact to ATP. The active-site N6-AMP-lysine intermediate is the K283. Residues R288 and R303 each coordinate ATP. 2 residues coordinate Mg(2+): E334 and E432. ATP contacts are provided by K437, R448, and K452. 2 disordered regions span residues P612 to V669 and K829 to R869. Low complexity-rich tracts occupy residues T622 to T635 and K829 to S859. The 94-residue stretch at P883–I976 folds into the BRCT 1 domain. The tract at residues P984–S1036 is disordered. The span at S987–S996 shows a compositional bias: low complexity. A compositionally biased stretch (polar residues) spans V1004 to Q1018. Positions Q1019–S1036 are enriched in basic and acidic residues. Residues H1067–L1174 enclose the BRCT 2 domain.

This sequence belongs to the ATP-dependent DNA ligase family. It depends on Mg(2+) as a cofactor.

It is found in the nucleus. It catalyses the reaction ATP + (deoxyribonucleotide)n-3'-hydroxyl + 5'-phospho-(deoxyribonucleotide)m = (deoxyribonucleotide)n+m + AMP + diphosphate.. In terms of biological role, the alpha isoform interacts with DNA-repair protein XRCC1 and can correct defective DNA strand-break repair and sister chromatid exchange following treatment with ionizing radiation and alkylating agents. The beta isoform does not interact with XRCC1 and may be specifically involved in the completion of homologous recombination events that occur during meiotic prophase. This Dictyostelium discoideum (Social amoeba) protein is DNA ligase 3 (lig3).